The following is an 81-amino-acid chain: MRKLALVPIQFYRYAISPLMASHCRFYPSCSCYAYEAIENHGLLRGGWLSIRRLGRCHPWNPGGYDPVPAVPTSRSSSMAE.

Belongs to the UPF0161 family.

The protein resides in the cell inner membrane. In terms of biological role, could be involved in insertion of integral membrane proteins into the membrane. In Pseudomonas syringae pv. syringae (strain B728a), this protein is Putative membrane protein insertion efficiency factor.